A 208-amino-acid chain; its full sequence is MNFSIEQYSKFMTLLDMLLHNLQTLHMSLEDSIKWLGEVMAEIGPNHSQKSEDFHVFEVKEANAIIDYLKISLFQHYRLYEFLFYSTREEIVIGTEQTIEVVKPADYPFPAPLEEGISLDTYSTFIEPLPTPDMEQKVLDQEQGTQEALLESEMREEDPLGGFTIDDVKSALERVTDEVLISMQKEISEKLQVQEEAFNARIEKLKKA.

As to expression, testis-specific. Expressed in spermatocytes and round spermatids (at protein level).

It is found in the cytoplasm. The protein localises to the cytoskeleton. The protein resides in the microtubule organizing center. Its subcellular location is the centrosome. It localises to the cell projection. It is found in the cilium. The protein localises to the flagellum. In terms of biological role, calcium-binding protein. May be involved in the control of sperm flagellar movement. This is Ciliary-associated calcium-binding coiled-coil protein 1 from Mus musculus (Mouse).